Reading from the N-terminus, the 526-residue chain is 2-isopropylmalate synthase (526 aa).

Residues 5 to 267 (VIIFDTTLRD…HTGIRHQEIY (263 aa)) form the Pyruvate carboxyltransferase domain. 4 residues coordinate Mn(2+): D14, H202, H204, and N238. The interval 393–526 (RLEYFSVQSG…VPSISTSSTH (134 aa)) is regulatory domain.

The protein belongs to the alpha-IPM synthase/homocitrate synthase family. LeuA type 1 subfamily. In terms of assembly, homodimer. Mn(2+) serves as cofactor.

Its subcellular location is the cytoplasm. It catalyses the reaction 3-methyl-2-oxobutanoate + acetyl-CoA + H2O = (2S)-2-isopropylmalate + CoA + H(+). It participates in amino-acid biosynthesis; L-leucine biosynthesis; L-leucine from 3-methyl-2-oxobutanoate: step 1/4. Functionally, catalyzes the condensation of the acetyl group of acetyl-CoA with 3-methyl-2-oxobutanoate (2-ketoisovalerate) to form 3-carboxy-3-hydroxy-4-methylpentanoate (2-isopropylmalate). The sequence is that of 2-isopropylmalate synthase from Edwardsiella ictaluri (strain 93-146).